Here is a 433-residue protein sequence, read N- to C-terminus: Myricetin 3-O-glucosyl 1,2-rhamnoside 6'-O-caffeoyltransferase AT2 (433 aa).

Catalysis depends on proton acceptor residues His157 and Asp375.

It belongs to the plant acyltransferase family. As to expression, expressed in young cromes.

It catalyses the reaction myricetin 3-O-[beta-D-glucosyl-(1-&gt;2)-alpha-L-rhamnoside] + (E)-caffeoyl-CoA = myricetin 3-O-[(6-O-(E)-caffeoyl-beta-D-glucosyl)-(1-&gt;2)-alpha-L-rhamnoside] + CoA. Its pathway is flavonoid metabolism. Caffeoyltransferase involved in montbretin A (MbA) biosynthesis. Catalyzes the caffeoylation of myricetin 3-O-beta-D-glucosyl 1,2-alpha-L-rhamnoside (MRG) to produce myricetin 3-O-(6'-O-caffeoyl)-beta-D-glucosyl 1,2-alpha-L-rhamnoside (mini-MbA), a precursor of MbA. Mini-MbA and MbA are potent inhibitors of human pancreatic alpha-amylase and are being developed as drug candidates to treat type-2 diabetes. In vitro, is able to catalyze the caffeoylation of quercetin 3-O-sophoroside (QGG), although QGG may not be a physiological substrate in vivo. In vitro, can use coumaryl-CoA, feruloyl-CoA and acetyl-CoA, although these three acyl donors may not be physiological in vivo. The chain is Myricetin 3-O-glucosyl 1,2-rhamnoside 6'-O-caffeoyltransferase AT2 from Crocosmia x crocosmiiflora (Montbretia).